The chain runs to 652 residues: Pesticidal crystal protein Cry3Bb (652 aa).

A compositionally biased stretch (basic and acidic residues) spans Met1 to Ile12. Disordered stretches follow at residues Met1–Pro33 and Lys433–Asp465. Over residues Val14–Pro33 the composition is skewed to polar residues.

The protein belongs to the delta endotoxin family. As to quaternary structure, monomer.

In terms of biological role, promotes colloidosmotic lysis by binding to the midgut epithelial cells of Coleoptera. Has moderate level of toxicity to southern corn rootworm. The chain is Pesticidal crystal protein Cry3Bb (cry3Bb) from Bacillus thuringiensis.